A 271-amino-acid chain; its full sequence is Mannosyl-3-phosphoglycerate phosphatase (271 aa).

The active-site Nucleophile is the D13. Residues D13, D15, and D214 each contribute to the Mg(2+) site.

It belongs to the HAD-like hydrolase superfamily. MPGP family. The cofactor is Mg(2+).

Its subcellular location is the cytoplasm. The catalysed reaction is 2-O-(alpha-D-mannosyl)-3-phosphoglycerate + H2O = (2R)-2-O-(alpha-D-mannosyl)-glycerate + phosphate. The sequence is that of Mannosyl-3-phosphoglycerate phosphatase from Escherichia coli (strain 55989 / EAEC).